The sequence spans 641 residues: WW domain-binding protein 11 (641 aa).

Polar residues predominate over residues 1–11 (MGRRSTSSTKS). The disordered stretch occupies residues 1-37 (MGRRSTSSTKSGKFMNPTDQARKEARKRELKKNKKQR). The tract at residues 1-45 (MGRRSTSSTKSGKFMNPTDQARKEARKRELKKNKKQRMMVRAAVL) is required for nuclear import. Lys13 bears the N6-acetyllysine mark. Basic residues predominate over residues 28–37 (RELKKNKKQR). A coiled-coil region spans residues 75 to 133 (EKVLKDKRKKLRETFERILRLYEKENPDIYKELRKLEVEYEQKRAQLSQYFDAVKNAQH). Ser181 carries the phosphoserine modification. The tract at residues 186–213 (LGHGVPRLPPGRKPPGPPPGPPPPQVVQ) is disordered. Arg192 carries the omega-N-methylarginine modification. A compositionally biased stretch (pro residues) spans 192–210 (RLPPGRKPPGPPPGPPPPQ). The tract at residues 217–221 (RKVGF) is interaction with PP1. Tyr236 is subject to Phosphotyrosine. Positions 236–552 (YSPELAQRGH…RPKADDTSAA (317 aa)) are disordered. Phosphoserine is present on Ser237. Residues 253–263 (SEDDGYPEDMD) are compositionally biased toward acidic residues. A compositionally biased stretch (basic and acidic residues) spans 276 to 304 (TDKSDGESDGDEFVHRDNGERDNNEEKKS). Ser279 and Ser283 each carry phosphoserine. The segment at 306–310 (LSVRF) is interaction with PP1. Residues 351–365 (EFSEDDDEDDSDDSE) are compositionally biased toward acidic residues. Phosphoserine is present on residues Ser353, Ser361, and Ser364. Residues 366-380 (AEKQSQKQHKEESHS) show a composition bias toward basic and acidic residues. Residues 386-404 (ASSQQQAPPQSVPPSQIQA) are compositionally biased toward low complexity. Composition is skewed to pro residues over residues 405–447 (PPMP…PPGM), 456–504 (RLLP…PPRP), and 510–530 (PLVP…PLPN). Residues 455–466 (PRLLPPGPPPGR) carry the PGR motif. Residue Lys557 forms a Glycyl lysine isopeptide (Lys-Gly) (interchain with G-Cter in SUMO2) linkage. N6-acetyllysine is present on Lys565. Lys572 participates in a covalent cross-link: Glycyl lysine isopeptide (Lys-Gly) (interchain with G-Cter in SUMO2). Positions 587–623 (RENKGATAAPQRKSEDDSAVPLAKAAPKSGPSVPVSV) are disordered. Ser600 bears the Phosphoserine mark.

As to quaternary structure, interacts with PPP1CA, PPP1CB and PPP1CC. Interacts via the PGR motif with PQBP1 in the nucleus. Interacts with the WW domains of WBP4. As to expression, ubiquitous. Highly expressed in the heart, pancreas, kidney skeletal muscle, placenta and brain (at protein level). Weakly expressed in liver and lung.

It localises to the nucleus. The protein resides in the cytoplasm. In terms of biological role, activates pre-mRNA splicing. May inhibit PP1 phosphatase activity. The protein is WW domain-binding protein 11 of Homo sapiens (Human).